The primary structure comprises 252 residues: MRFDVITLFPEFLAQSAGLGVVGRAREKGLFSLHGWNPRDYAEGNYRRVDDRPFGGGPGMVMLIEPLQACLQAIRDADPTPARVIHLSPQGAPLTQAKVRELAALPRMVLLCGRYEGIDERFLEANVDEEISLGDYVLSGGELGAAVIIDAVARLQDGALNDAESAAQDSFEGDLGLLDCPHYSQPAQHPLGDVPEVLRSGNHAAIAAWRRQQSLVRTAQRRPDLLDEQALGKADRKLLDQARQAQKQKASP.

S-adenosyl-L-methionine is bound by residues G113 and L133–L138.

This sequence belongs to the RNA methyltransferase TrmD family. In terms of assembly, homodimer.

It is found in the cytoplasm. The enzyme catalyses guanosine(37) in tRNA + S-adenosyl-L-methionine = N(1)-methylguanosine(37) in tRNA + S-adenosyl-L-homocysteine + H(+). In terms of biological role, specifically methylates guanosine-37 in various tRNAs. In Stenotrophomonas maltophilia (strain R551-3), this protein is tRNA (guanine-N(1)-)-methyltransferase.